The primary structure comprises 60 residues: Large ribosomal subunit protein uL30 (60 aa).

This sequence belongs to the universal ribosomal protein uL30 family. In terms of assembly, part of the 50S ribosomal subunit.

The sequence is that of Large ribosomal subunit protein uL30 from Shewanella baltica (strain OS223).